The primary structure comprises 259 residues: 5'-nucleotidase SurE (259 aa).

The a divalent metal cation site is built by D8, D9, S41, and N99.

The protein belongs to the SurE nucleotidase family. A divalent metal cation serves as cofactor.

The protein localises to the cytoplasm. The enzyme catalyses a ribonucleoside 5'-phosphate + H2O = a ribonucleoside + phosphate. In terms of biological role, nucleotidase that shows phosphatase activity on nucleoside 5'-monophosphates. The sequence is that of 5'-nucleotidase SurE from Synechococcus sp. (strain JA-3-3Ab) (Cyanobacteria bacterium Yellowstone A-Prime).